Here is a 217-residue protein sequence, read N- to C-terminus: MAARCVRLARGSLPAFALSLRSSPRLLCTAAKQKNNGQNLEEDAGQNEQKTDLPSTEKTLMEEKVKLEEQLKETMEKYKRALADTENLRQRSQKLVEEAKLYGIQGFCKDLLEVADILEKATQCVPQEEIRDDNPHLKSLYEGLVMTEVQIQKVFTKHGLLRLNPLGAKFDPYEHEALFHTPVEGKEPGTVALVNKVGYKLHGRTLRPALVGVVKGA.

A mitochondrion-targeting transit peptide spans 1–27; the sequence is MAARCVRLARGSLPAFALSLRSSPRLL. Lysine 94 is modified (N6-acetyllysine; alternate). An N6-succinyllysine; alternate modification is found at lysine 94. Lysine 100 carries the N6-acetyllysine modification. An N6-succinyllysine modification is found at lysine 120. Lysine 215 carries the N6-acetyllysine; alternate modification. At lysine 215 the chain carries N6-succinyllysine; alternate.

This sequence belongs to the GrpE family. As to quaternary structure, probable component of the PAM complex at least composed of a mitochondrial HSP70 protein, GRPEL1 or GRPEL2, TIMM44, TIMM16/PAM16 and TIMM14/DNAJC19. Binds to HSP70, HSC70 and HSJ1B.

The protein localises to the mitochondrion matrix. Its function is as follows. Essential component of the PAM complex, a complex required for the translocation of transit peptide-containing proteins from the inner membrane into the mitochondrial matrix in an ATP-dependent manner. Seems to control the nucleotide-dependent binding of mitochondrial HSP70 to substrate proteins. The sequence is that of GrpE protein homolog 1, mitochondrial (GRPEL1) from Bos taurus (Bovine).